A 469-amino-acid chain; its full sequence is Programmed cell death protein 4 (469 aa).

N-acetylmethionine is present on Met-1. Disordered regions lie at residues 1-30 (MDVENEQILNVNPTDPDNLSDSLFSGDEEN) and 58-128 (KAKR…GTPG). Residues 7–23 (QILNVNPTDPDNLSDSL) are compositionally biased toward polar residues. Ser-25 is modified (phosphoserine). Residues 58-64 (KAKRRLR) carry the Nuclear localization signal motif. Ser-67 is subject to Phosphoserine; by PKB and RPS6KB1. Residues Ser-68, Ser-71, Ser-76, Ser-78, and Ser-94 each carry the phosphoserine modification. The short motif at 70-76 (DSGRGDS) is the Phosphodegron element. The span at 114–125 (KKGGAGGKGVWG) shows a compositional bias: gly residues. Phosphotyrosine is present on Tyr-152. The MI 1 domain maps to 163–284 (AFEKTLTPII…CNTYIDSYKG (122 aa)). 2 positions are modified to phosphoserine: Ser-313 and Ser-317. The region spanning 326–449 (HLVKEIDMLL…SKQLRDLCPS (124 aa)) is the MI 2 domain. The Nuclear localization signal signature appears at 448-454 (PSRGRKR). The residue at position 457 (Ser-457) is a Phosphoserine.

The protein belongs to the PDCD4 family. In terms of assembly, interacts (via MI domains) with EIF4A2. Interacts (via MI domains) with EIF4A1 (via N-terminal domain). Heterotrimer with EIF4A1; one molecule of PDCD4 binds two molecules of EIF4A1. Interacts with EIF4G1. May form a complex with EIF4A1 and EIF4G1. The interaction between PDCD4 and EIF4A1 interferes with the interaction between EIF4A1 and EIF4G. When phosphorylated, interacts with BTRC and FBXW11. Polyubiquitinated, leading to its proteasomal degradation. Rapidly degraded in response to mitogens. Phosphorylation of the phosphodegron promotes interaction with BTRC and proteasomal degradation. In terms of processing, phosphorylated at Ser-67 by RPS6KB1 in response to mitogens; phosphorylation promotes proteasomal degradation of PDCD4.

The protein localises to the nucleus. It localises to the cytoplasm. Its function is as follows. Inhibits translation initiation and cap-dependent translation. May excert its function by hindering the interaction between EIF4A1 and EIF4G. Inhibits the helicase activity of EIF4A. Modulates the activation of JUN kinase. Down-regulates the expression of MAP4K1, thus inhibiting events important in driving invasion, namely, MAPK85 activation and consequent JUN-dependent transcription. May play a role in apoptosis. Tumor suppressor. Inhibits tumor promoter-induced neoplastic transformation. Binds RNA. The sequence is that of Programmed cell death protein 4 (Pdcd4) from Rattus norvegicus (Rat).